A 296-amino-acid chain; its full sequence is Ribosomal RNA small subunit methyltransferase J (296 aa).

Asp-205 contacts S-adenosyl-L-methionine.

This sequence belongs to the methyltransferase superfamily. RsmJ family.

Its subcellular location is the cytoplasm. The enzyme catalyses guanosine(1516) in 16S rRNA + S-adenosyl-L-methionine = N(2)-methylguanosine(1516) in 16S rRNA + S-adenosyl-L-homocysteine + H(+). In terms of biological role, specifically methylates the guanosine in position 1516 of 16S rRNA. This chain is Ribosomal RNA small subunit methyltransferase J, found in Psychrobacter arcticus (strain DSM 17307 / VKM B-2377 / 273-4).